Here is a 631-residue protein sequence, read N- to C-terminus: Nucleoside triphosphatase I (631 aa).

The region spanning 42 to 204 (FLGLDTMHSI…TMIVNLLRPK (163 aa)) is the Helicase ATP-binding domain. 55-62 (HDTGVGKT) contacts ATP. Positions 141 to 144 (DECH) match the DEXH box motif. One can recognise a Helicase C-terminal domain in the interval 367–536 (KFTEVCLKIL…LFKVFKESSI (170 aa)). The binding to the cap-specific mRNA (nucleoside-2'-O-)-methyltransferase stretch occupies residues 457-524 (DIFILDMTWN…NIIKTKSKEF (68 aa)).

It belongs to the helicase family. NPH I subfamily. In terms of assembly, monomer. Interacts (via C-terminus) with RAP94 (via N-terminus). Interacts with the cap-specific mRNA (nucleoside-2'-O-)-methyltransferase.

The protein resides in the virion. The enzyme catalyses a ribonucleoside 5'-triphosphate + H2O = a ribonucleoside 5'-diphosphate + phosphate + H(+). Functionally, DNA-dependent ATPase required for providing the needed energy to achieve the termination of early transcripts. Acts in concert with the RAP94 subunit of the virion RNA polymerase and the capping enzyme/VTF to catalyze release of UUUUUNU-containing nascent RNA from the elongation complex. NPH-I must bind ssDNA in order to exhibit ATPase activity. The sequence is that of Nucleoside triphosphatase I (NPH1) from Erythrocebus patas (Red guenon).